The chain runs to 243 residues: 1-(5-phosphoribosyl)-5-[(5-phosphoribosylamino)methylideneamino] imidazole-4-carboxamide isomerase (243 aa).

Residue Asp-8 is the Proton acceptor of the active site. The active-site Proton donor is the Asp-129.

Belongs to the HisA/HisF family.

The protein resides in the cytoplasm. The enzyme catalyses 1-(5-phospho-beta-D-ribosyl)-5-[(5-phospho-beta-D-ribosylamino)methylideneamino]imidazole-4-carboxamide = 5-[(5-phospho-1-deoxy-D-ribulos-1-ylimino)methylamino]-1-(5-phospho-beta-D-ribosyl)imidazole-4-carboxamide. The protein operates within amino-acid biosynthesis; L-histidine biosynthesis; L-histidine from 5-phospho-alpha-D-ribose 1-diphosphate: step 4/9. This is 1-(5-phosphoribosyl)-5-[(5-phosphoribosylamino)methylideneamino] imidazole-4-carboxamide isomerase from Brucella suis biovar 1 (strain 1330).